The chain runs to 251 residues: Esterase mlcF (251 aa).

Active-site charge relay system residues include Ser126, Asp193, and His221.

This sequence belongs to the LovG family.

It catalyses the reaction dihydro-ML-236C-[compactin nonaketide synthase] + H2O = holo-[compactin nonaketide synthase] + dihydro-ML-236C carboxylate + H(+). It participates in polyketide biosynthesis. Functionally, esterase; part of the gene cluster that mediates the biosynthesis of compactin, also known as mevastatin or ML-236B, and which acts as a potent competitive inhibitor of HMG-CoA reductase. Compactin biosynthesis is performed in two stages. The first stage is catalyzed by the nonaketide synthase mlcA, which belongs to type I polyketide synthases and catalyzes the iterative nine-step formation of the polyketide. This PKS stage is completed by the action of dehydrogenase mlcG, which catalyzes the NADPH-dependent reduction of the unsaturated tetra-, penta- and heptaketide intermediates that arise during the mlcA-mediated biosynthesis of the nonaketide chain and leads to dihydro-ML-236C carboxylate. Covalently bound dihydro-ML-236C carboxylate is released from mlcA by the mlcF esterase. Conversion of dihydro-ML-236C carboxylate into ML-236A carboxylate is subsequently performed with the participation of molecular oxygen and P450 monoogygenase mlcC. Finally, mlcH performs the conversion of ML-236A carboxylate to ML-236B/compactin carboxylate through the addition of the side-chain diketide moiety produced by the diketide synthase mlcB. This is Esterase mlcF from Penicillium citrinum.